The chain runs to 153 residues: Ribosome maturation factor RimP (153 aa).

It belongs to the RimP family.

It is found in the cytoplasm. Required for maturation of 30S ribosomal subunits. The protein is Ribosome maturation factor RimP of Marinomonas sp. (strain MWYL1).